The chain runs to 298 residues: Exosome complex component Rrp4 (298 aa).

The S1 motif domain maps to 63–131 (GDVVIGKIKD…EVKKVKLGLK (69 aa)). The KH domain maps to 139-197 (RGGIIVDITPTKVPRLIGKKGSMINMIKDKTNCKIIVGQNGLVWVKGEEDMEQLTKDII). A disordered region spans residues 276–298 (KNKKDKPLSYGNNSGNSYILNNR). The span at 285–298 (YGNNSGNSYILNNR) shows a compositional bias: polar residues.

It belongs to the RRP4 family. Component of the archaeal exosome complex. Forms a trimer of Rrp4 and/or Csl4 subunits. The trimer associates with a hexameric ring-like arrangement composed of 3 Rrp41-Rrp42 heterodimers.

The protein resides in the cytoplasm. Functionally, non-catalytic component of the exosome, which is a complex involved in RNA degradation. Increases the RNA binding and the efficiency of RNA degradation. Confers strong poly(A) specificity to the exosome. In Methanobrevibacter smithii (strain ATCC 35061 / DSM 861 / OCM 144 / PS), this protein is Exosome complex component Rrp4.